The following is an 87-amino-acid chain: Translation initiation factor IF-1 (87 aa).

The S1-like domain occupies 16 to 87 (LSKEDVIEME…TKGRISYRHK (72 aa)).

The protein belongs to the IF-1 family. Component of the 30S ribosomal translation pre-initiation complex which assembles on the 30S ribosome in the order IF-2 and IF-3, IF-1 and N-formylmethionyl-tRNA(fMet); mRNA recruitment can occur at any time during PIC assembly.

Its subcellular location is the cytoplasm. In terms of biological role, one of the essential components for the initiation of protein synthesis. Stabilizes the binding of IF-2 and IF-3 on the 30S subunit to which N-formylmethionyl-tRNA(fMet) subsequently binds. Helps modulate mRNA selection, yielding the 30S pre-initiation complex (PIC). Upon addition of the 50S ribosomal subunit IF-1, IF-2 and IF-3 are released leaving the mature 70S translation initiation complex. The sequence is that of Translation initiation factor IF-1 from Magnetococcus marinus (strain ATCC BAA-1437 / JCM 17883 / MC-1).